Reading from the N-terminus, the 124-residue chain is Large ribosomal subunit protein bL12 (124 aa).

Belongs to the bacterial ribosomal protein bL12 family. In terms of assembly, homodimer. Part of the ribosomal stalk of the 50S ribosomal subunit. Forms a multimeric L10(L12)X complex, where L10 forms an elongated spine to which 2 to 4 L12 dimers bind in a sequential fashion. Binds GTP-bound translation factors.

Functionally, forms part of the ribosomal stalk which helps the ribosome interact with GTP-bound translation factors. Is thus essential for accurate translation. The chain is Large ribosomal subunit protein bL12 from Burkholderia mallei (strain NCTC 10247).